A 177-amino-acid polypeptide reads, in one-letter code: Adenylyl-sulfate kinase (177 aa).

12–19 (GLSGAGKT) is an ATP binding site. Ser86 acts as the Phosphoserine intermediate in catalysis.

The protein belongs to the APS kinase family.

The catalysed reaction is adenosine 5'-phosphosulfate + ATP = 3'-phosphoadenylyl sulfate + ADP + H(+). It participates in sulfur metabolism; hydrogen sulfide biosynthesis; sulfite from sulfate: step 2/3. Functionally, catalyzes the synthesis of activated sulfate. In Picosynechococcus sp. (strain ATCC 27264 / PCC 7002 / PR-6) (Agmenellum quadruplicatum), this protein is Adenylyl-sulfate kinase.